The following is a 214-amino-acid chain: Glycerol-3-phosphate acyltransferase (214 aa).

5 consecutive transmembrane segments (helical) span residues 4–24, 52–72, 82–102, 118–138, and 159–179; these read LIVA…IVSA, AAIL…WFVV, DTSV…PAFF, LAIN…VAFF, and FLFG…LLVW.

The protein belongs to the PlsY family. Probably interacts with PlsX.

It localises to the cell inner membrane. It carries out the reaction an acyl phosphate + sn-glycerol 3-phosphate = a 1-acyl-sn-glycero-3-phosphate + phosphate. Its pathway is lipid metabolism; phospholipid metabolism. Its function is as follows. Catalyzes the transfer of an acyl group from acyl-phosphate (acyl-PO(4)) to glycerol-3-phosphate (G3P) to form lysophosphatidic acid (LPA). This enzyme utilizes acyl-phosphate as fatty acyl donor, but not acyl-CoA or acyl-ACP. This chain is Glycerol-3-phosphate acyltransferase, found in Paraburkholderia xenovorans (strain LB400).